Here is a 72-residue protein sequence, read N- to C-terminus: DNA gyrase inhibitor YacG (72 aa).

4 residues coordinate Zn(2+): C7, C10, C26, and C30. Residues 44–72 (SIAGEEHTPSSDTARPQLSAEDLALLEQD) are disordered.

Belongs to the DNA gyrase inhibitor YacG family. As to quaternary structure, interacts with GyrB. Zn(2+) is required as a cofactor.

In terms of biological role, inhibits all the catalytic activities of DNA gyrase by preventing its interaction with DNA. Acts by binding directly to the C-terminal domain of GyrB, which probably disrupts DNA binding by the gyrase. In Tolumonas auensis (strain DSM 9187 / NBRC 110442 / TA 4), this protein is DNA gyrase inhibitor YacG.